The primary structure comprises 358 residues: Peptide chain release factor 1 (358 aa).

Q233 bears the N5-methylglutamine mark.

Belongs to the prokaryotic/mitochondrial release factor family. Post-translationally, methylated by PrmC. Methylation increases the termination efficiency of RF1.

The protein localises to the cytoplasm. In terms of biological role, peptide chain release factor 1 directs the termination of translation in response to the peptide chain termination codons UAG and UAA. The protein is Peptide chain release factor 1 of Lachnoclostridium phytofermentans (strain ATCC 700394 / DSM 18823 / ISDg) (Clostridium phytofermentans).